Here is a 538-residue protein sequence, read N- to C-terminus: Nicotinate phosphoribosyltransferase (538 aa).

Residues tyrosine 21 and threonine 210 each coordinate nicotinate. Position 213 is a phosphohistidine (histidine 213). Arginine 318 serves as a coordination point for nicotinate. 5-phospho-alpha-D-ribose 1-diphosphate is bound at residue threonine 380.

The protein belongs to the NAPRTase family. Homodimer. The cofactor is Mg(2+). Mn(2+) is required as a cofactor. Transiently phosphorylated on a His residue during the reaction cycle. Phosphorylation strongly increases the affinity for substrates and increases the rate of nicotinate D-ribonucleotide production. Dephosphorylation regenerates the low-affinity form of the enzyme, leading to product release.

The protein resides in the cytoplasm. The protein localises to the cytosol. It carries out the reaction nicotinate + 5-phospho-alpha-D-ribose 1-diphosphate + ATP + H2O = nicotinate beta-D-ribonucleotide + ADP + phosphate + diphosphate. It participates in cofactor biosynthesis; NAD(+) biosynthesis; nicotinate D-ribonucleotide from nicotinate: step 1/1. In terms of biological role, catalyzes the first step in the biosynthesis of NAD from nicotinic acid, the ATP-dependent synthesis of beta-nicotinate D-ribonucleotide from nicotinate and 5-phospho-D-ribose 1-phosphate. Helps prevent cellular oxidative stress via its role in NAD biosynthesis. The chain is Nicotinate phosphoribosyltransferase (Naprt) from Rattus norvegicus (Rat).